Reading from the N-terminus, the 363-residue chain is Putative agmatine deiminase 1 (363 aa).

The active-site Amidino-cysteine intermediate is C356.

This sequence belongs to the agmatine deiminase family.

It catalyses the reaction agmatine + H2O = N-carbamoylputrescine + NH4(+). This is Putative agmatine deiminase 1 from Listeria monocytogenes serovar 1/2a (strain ATCC BAA-679 / EGD-e).